The chain runs to 398 residues: Acetate kinase (398 aa).

Asn-10 is a Mg(2+) binding site. Residue Lys-17 coordinates ATP. Residue Arg-91 participates in substrate binding. Asp-148 acts as the Proton donor/acceptor in catalysis. ATP contacts are provided by residues 208–212, 283–285, and 331–335; these read HLGNG, DCR, and GIGEN. Glu-385 is a Mg(2+) binding site.

Belongs to the acetokinase family. Homodimer. Mg(2+) serves as cofactor. The cofactor is Mn(2+).

It localises to the cytoplasm. The catalysed reaction is acetate + ATP = acetyl phosphate + ADP. The protein operates within metabolic intermediate biosynthesis; acetyl-CoA biosynthesis; acetyl-CoA from acetate: step 1/2. Functionally, catalyzes the formation of acetyl phosphate from acetate and ATP. Can also catalyze the reverse reaction. The chain is Acetate kinase from Shewanella loihica (strain ATCC BAA-1088 / PV-4).